Here is a 313-residue protein sequence, read N- to C-terminus: Aspartoacylase (313 aa).

Residues His21 and Glu24 each contribute to the Zn(2+) site. 3 residues coordinate N-acetyl-L-aspartate: Arg63, Asn70, and Arg71. His116 provides a ligand contact to Zn(2+). Residues Tyr164 and Arg168 each contribute to the N-acetyl-L-aspartate site. Glu178 acts as the Proton donor/acceptor in catalysis. Residue Tyr288 participates in N-acetyl-L-aspartate binding.

Belongs to the AspA/AstE family. Aspartoacylase subfamily. As to quaternary structure, homodimer. Requires Zn(2+) as cofactor.

Its subcellular location is the cytoplasm. It is found in the nucleus. The catalysed reaction is an N-acyl-L-aspartate + H2O = a carboxylate + L-aspartate. It catalyses the reaction N-acetyl-L-aspartate + H2O = L-aspartate + acetate. Functionally, catalyzes the deacetylation of N-acetylaspartic acid (NAA) to produce acetate and L-aspartate. NAA occurs in high concentration in brain and its hydrolysis NAA plays a significant part in the maintenance of intact white matter. In other tissues it acts as a scavenger of NAA from body fluids. The polypeptide is Aspartoacylase (Pongo abelii (Sumatran orangutan)).